A 198-amino-acid polypeptide reads, in one-letter code: MVALLAEHTDTNQQAGLLVRPDNHDSLSVAVTATPVVTTTGTPATPPGLELEIQNGDGVGKRAGLPPRRKIETWVKSALYADAALTIRFVDEEEGRTLNRTYRGKDYATNVLTFAYAENEEDPVTGDIVLCCPVVETEAREQRKPLEAHYAHLIVHGVLHAQGYEHEEDAEAEEMEAIETETLQALGYADPYQGDRTV.

Zn(2+)-binding residues include His156, His160, and His166.

This sequence belongs to the endoribonuclease YbeY family. Zn(2+) is required as a cofactor.

It is found in the cytoplasm. Its function is as follows. Single strand-specific metallo-endoribonuclease involved in late-stage 70S ribosome quality control and in maturation of the 3' terminus of the 16S rRNA. This is Endoribonuclease YbeY from Cupriavidus necator (strain ATCC 17699 / DSM 428 / KCTC 22496 / NCIMB 10442 / H16 / Stanier 337) (Ralstonia eutropha).